We begin with the raw amino-acid sequence, 56 residues long: uncharacterized protein (56 aa).

This is an uncharacterized protein from Treponema pallidum (strain Nichols).